The following is a 40-amino-acid chain: Ice-structuring protein GS-8 (40 aa).

M1 is modified (blocked amino end (Met)).

It belongs to the type-I AFP family.

In terms of biological role, antifreeze proteins lower the blood freezing point. The polypeptide is Ice-structuring protein GS-8 (Myoxocephalus aenaeus (Grubby sculpin)).